The following is a 945-amino-acid chain: Leucine--tRNA ligase (945 aa).

Residues 43 to 53 (PYPNGAIHIGH) carry the 'HIGH' region motif. Residues 638 to 642 (KMSKS) carry the 'KMSKS' region motif. Lys-641 serves as a coordination point for ATP.

The protein belongs to the class-I aminoacyl-tRNA synthetase family.

It localises to the cytoplasm. The catalysed reaction is tRNA(Leu) + L-leucine + ATP = L-leucyl-tRNA(Leu) + AMP + diphosphate. The polypeptide is Leucine--tRNA ligase (Pyrobaculum neutrophilum (strain DSM 2338 / JCM 9278 / NBRC 100436 / V24Sta) (Thermoproteus neutrophilus)).